The following is a 117-amino-acid chain: Type II secretion system protein I (117 aa).

Positions 1–6 are cleaved as a propeptide — leader sequence; that stretch reads MKSKRG. F7 carries the N-methylphenylalanine modification. A helical transmembrane segment spans residues 7–27; that stretch reads FTLLEVLVALAIFATAAISVI.

Belongs to the GSP I family. As to quaternary structure, type II secretion is composed of four main components: the outer membrane complex, the inner membrane complex, the cytoplasmic secretion ATPase and the periplasm-spanning pseudopilus. Interacts with core component EpsG. Post-translationally, cleaved by prepilin peptidase. Methylated by prepilin peptidase at the amino group of the N-terminal phenylalanine once the leader sequence is cleaved by prepilin peptidase.

It is found in the cell inner membrane. In terms of biological role, component of the type II secretion system required for the energy-dependent secretion of extracellular factors such as proteases and toxins from the periplasm. Part of the pseudopilus tip complex that is critical for the recognition and binding of secretion substrates. This Vibrio cholerae serotype O1 (strain ATCC 39315 / El Tor Inaba N16961) protein is Type II secretion system protein I (epsI).